The following is a 1028-amino-acid chain: MDLNGETSTKRKRSSVAAPAERPAKHLKPGNSTLTPGDATPANGTVYNVEDEEDTGRVMPIGPAQADSPEWQATIEKVVKSVVSIHFCQTCSFDTDLSMSSQATGFVVDAERGYILTNRHVVCAGPFWGYCIFDNHEECDVHPVYRDPVHDFGILKFNPKAIRYMELTELKLRPEAARVGCEIRVVGNDAGEKLSILSGVISRLDRNAPEYGDGYCDFNTNYIQAAAAASGGSSGSPVVNIDGHAIALQAGGRADGAATDYFLPLDRPLRALECIRRGEPVTRGTIQTQWILKPFDECRRLGLTPEWEAAVRKASPHETSMLVAEIILPEGPADGKLEEGDVLLQVNGELLTQFIRLDDILDSSVGKTVRLLVQRGGQNVEVECEVGDLHAITPDRFVTVAGGTFHNLSYQQARLYAIAARGVYVCEAAGSFKLENTLSGWIIDAVDKRPTRNLDEFIEVMKTIPDRARVVISYRHIRDLHTRGTSIVYIDRHWHPKMRMAIRNDETGLWDFSDLADPVPAETPVPRKADFIQLDGVSQPAVADIVRSFVRVSCTMPLKLDGYPQAKKTGFGLVIDAGKGLVVVSRAIVPYDLCDINITVADSIIVVAKVIFMHPLQNYTIIQYDPSLVQAPVQSAELSTEYIKQGQETIFVGFNQNFRIVVAKTAVTDITTVSIPANASAPRYRAINLDAITVDTGLSGQCTNGVLIGEDGVVQALWLNYLGERTPNSHKDVEYHLGFATPALLPVTSKIQQGIIPKLRILNMESYVVQMSQARIMGVSEEWIQKVAQANPSRHQLFMVRKVDCPPPQFTSNADSLQEGDIILTLDGQLITRVSELDKMYEKEVLDALIVRNGQEIHLKLPTVPTEDLETDRAVVFCGAVLQKPHHAVRQQISKLHSEVYVSARSRGSPAYQYGLAPTNFITAVNGVSTPNLDSFVREVSMIPDNTYFRLRAVTFDNVPWVVTMKKNDHYFPMSEYVKDPSQPLGWRTVSHERDRHKDGITPDAANLNPDAMDEVYEEVSDVEPEVD.

The segment at 1–46 (MDLNGETSTKRKRSSVAAPAERPAKHLKPGNSTLTPGDATPANGTV) is disordered. The segment at 82–266 (VVSIHFCQTC…AATDYFLPLD (185 aa)) is serine protease. Catalysis depends on charge relay system residues His120, Asp151, and Ser233. PDZ domains lie at 289–374 (QWIL…LLVQ) and 876–957 (VFCG…VTFD). Positions 991 to 1001 (SHERDRHKDGI) are enriched in basic and acidic residues. The segment at 991-1028 (SHERDRHKDGITPDAANLNPDAMDEVYEEVSDVEPEVD) is disordered. A compositionally biased stretch (acidic residues) spans 1012–1028 (AMDEVYEEVSDVEPEVD).

It belongs to the peptidase S1C family.

It is found in the nucleus. Nuclear serine protease which mediates apoptosis. This Aspergillus fumigatus (strain ATCC MYA-4609 / CBS 101355 / FGSC A1100 / Af293) (Neosartorya fumigata) protein is Pro-apoptotic serine protease nma111 (nma111).